The primary structure comprises 217 residues: ATP-dependent Clp protease proteolytic subunit 2 (217 aa).

Catalysis depends on S113, which acts as the Nucleophile. Residue H138 is part of the active site.

It belongs to the peptidase S14 family. In terms of assembly, fourteen ClpP subunits assemble into 2 heptameric rings which stack back to back to give a disk-like structure with a central cavity, resembling the structure of eukaryotic proteasomes.

It localises to the cytoplasm. It carries out the reaction Hydrolysis of proteins to small peptides in the presence of ATP and magnesium. alpha-casein is the usual test substrate. In the absence of ATP, only oligopeptides shorter than five residues are hydrolyzed (such as succinyl-Leu-Tyr-|-NHMec, and Leu-Tyr-Leu-|-Tyr-Trp, in which cleavage of the -Tyr-|-Leu- and -Tyr-|-Trp bonds also occurs).. Cleaves peptides in various proteins in a process that requires ATP hydrolysis. Has a chymotrypsin-like activity. Plays a major role in the degradation of misfolded proteins. This is ATP-dependent Clp protease proteolytic subunit 2 from Frankia casuarinae (strain DSM 45818 / CECT 9043 / HFP020203 / CcI3).